The sequence spans 209 residues: Lipid A acyltransferase PagP (209 aa).

A signal peptide spans 1 to 24 (MHLKRALITLSLITLPIIPFSSYA). Residues H81, D124, and S125 contribute to the active site.

It belongs to the lipid A palmitoyltransferase family. Homodimer.

It is found in the cell outer membrane. It carries out the reaction a lipid A + a 1,2-diacyl-sn-glycero-3-phosphocholine = a hepta-acyl lipid A + a 2-acyl-sn-glycero-3-phosphocholine. The catalysed reaction is a lipid IVA + a 1,2-diacyl-sn-glycero-3-phosphocholine = a lipid IVB + a 2-acyl-sn-glycero-3-phosphocholine. It catalyses the reaction a lipid IIA + a 1,2-diacyl-sn-glycero-3-phosphocholine = a lipid IIB + a 2-acyl-sn-glycero-3-phosphocholine. Functionally, transfers a fatty acid residue from the sn-1 position of a phospholipid to the N-linked hydroxyfatty acid chain on the proximal unit of lipid A or its precursors. This chain is Lipid A acyltransferase PagP, found in Pectobacterium parmentieri (strain WPP163) (Pectobacterium wasabiae (strain WPP163)).